Here is a 566-residue protein sequence, read N- to C-terminus: Arginine--tRNA ligase (566 aa).

A 'HIGH' region motif is present at residues proline 123 to histidine 133.

It belongs to the class-I aminoacyl-tRNA synthetase family. As to quaternary structure, monomer.

The protein localises to the cytoplasm. It carries out the reaction tRNA(Arg) + L-arginine + ATP = L-arginyl-tRNA(Arg) + AMP + diphosphate. The sequence is that of Arginine--tRNA ligase from Clostridioides difficile (strain 630) (Peptoclostridium difficile).